Reading from the N-terminus, the 231-residue chain is Large ribosomal subunit protein uL1 (231 aa).

Belongs to the universal ribosomal protein uL1 family. In terms of assembly, part of the 50S ribosomal subunit.

Functionally, binds directly to 23S rRNA. The L1 stalk is quite mobile in the ribosome, and is involved in E site tRNA release. Its function is as follows. Protein L1 is also a translational repressor protein, it controls the translation of the L11 operon by binding to its mRNA. The sequence is that of Large ribosomal subunit protein uL1 from Janthinobacterium sp. (strain Marseille) (Minibacterium massiliensis).